Reading from the N-terminus, the 138-residue chain is Putative pre-16S rRNA nuclease (138 aa).

This sequence belongs to the YqgF nuclease family.

The protein localises to the cytoplasm. Functionally, could be a nuclease involved in processing of the 5'-end of pre-16S rRNA. This chain is Putative pre-16S rRNA nuclease, found in Geobacillus thermodenitrificans (strain NG80-2).